The chain runs to 154 residues: Lipoprotein signal peptidase (154 aa).

3 helical membrane-spanning segments follow: residues 4 to 24 (IIIP…KLWI), 62 to 82 (LFTL…MKHI), and 84 to 104 (GSYW…GNFI). Active-site residues include Asp-114 and Asp-130. Residues 125–145 (IFNVADSYLTIGIICLMIALW) traverse the membrane as a helical segment.

This sequence belongs to the peptidase A8 family.

It localises to the cell membrane. It carries out the reaction Release of signal peptides from bacterial membrane prolipoproteins. Hydrolyzes -Xaa-Yaa-Zaa-|-(S,diacylglyceryl)Cys-, in which Xaa is hydrophobic (preferably Leu), and Yaa (Ala or Ser) and Zaa (Gly or Ala) have small, neutral side chains.. It functions in the pathway protein modification; lipoprotein biosynthesis (signal peptide cleavage). Its function is as follows. This protein specifically catalyzes the removal of signal peptides from prolipoproteins. This Streptococcus agalactiae serotype V (strain ATCC BAA-611 / 2603 V/R) protein is Lipoprotein signal peptidase.